The primary structure comprises 780 residues: ATP-dependent 6-phosphofructokinase, muscle type (780 aa).

T2 carries the N-acetylthreonine modification. The tract at residues 2-390 (THEEHHAAKT…NWEVYKLLAH (389 aa)) is N-terminal catalytic PFK domain 1. Residues G25, 88-89 (RC), and 118-121 (GDGS) each bind ATP. D119 provides a ligand contact to Mg(2+). S133 carries the phosphoserine modification. Residues 164 to 166 (SID), R201, 208 to 210 (MGR), E264, R292, and 298 to 301 (HVQR) each bind substrate. D166 functions as the Proton acceptor in the catalytic mechanism. At S377 the chain carries Phosphoserine. Positions 391-401 (VRPPVSKGGLH) are interdomain linker. Residues 402–780 (TVAVMNVGAP…SRKRSGEAAV (379 aa)) are C-terminal regulatory PFK domain 2. Residues R471 and 528 to 532 (TVSNN) each bind beta-D-fructose 2,6-bisphosphate. A glycan (O-linked (GlcNAc) serine) is linked at S530. N6-(2-hydroxyisobutyryl)lysine is present on K557. Residues R566, 573–575 (MGG), E629, R655, and 661–664 (HMQQ) each bind beta-D-fructose 2,6-bisphosphate. Phosphoserine is present on S667. R735 lines the beta-D-fructose 2,6-bisphosphate pocket. S775 is modified (phosphoserine).

Belongs to the phosphofructokinase type A (PFKA) family. ATP-dependent PFK group I subfamily. Eukaryotic two domain clade 'E' sub-subfamily. Homo- and heterotetramers. Phosphofructokinase (PFK) enzyme functions as a tetramer composed of different combinations of 3 types of subunits, called PFKM (M), PFKL (L) and PFKP (P). The composition of the PFK tetramer differs according to the tissue type it is present in. The kinetic and regulatory properties of the tetrameric enzyme are dependent on the subunit composition, hence can vary across tissues. Isoform 2 and isoform 3 interact (via N-terminal testis-specific region) with GSTM5. Isoform 2 and isoform 3 interact (via C-terminus) with HK1 (via N-terminal spermatogenic cell-specific region). It depends on Mg(2+) as a cofactor. GlcNAcylation decreases enzyme activity. Isoform 1 is expressed in skeletal muscle (at protein level). Isoform 2 and isoform 3 are testis-specific and are detected in quiescent sperm (at protein level). They are first detected in the cytoplasm of round spermatids and subsequently in the flagellum of elongated spermatids extending into the seminiferous tubule lumen (at protein level). Isoform 2 is expressed at higher level than isoform 3 in testis.

Its subcellular location is the cytoplasm. The protein resides in the cell projection. The protein localises to the cilium. It localises to the flagellum. The catalysed reaction is beta-D-fructose 6-phosphate + ATP = beta-D-fructose 1,6-bisphosphate + ADP + H(+). The protein operates within carbohydrate degradation; glycolysis; D-glyceraldehyde 3-phosphate and glycerone phosphate from D-glucose: step 3/4. Allosterically activated by ADP, AMP, or fructose 2,6-bisphosphate, and allosterically inhibited by ATP or citrate. Catalyzes the phosphorylation of D-fructose 6-phosphate to fructose 1,6-bisphosphate by ATP, the first committing step of glycolysis. This is ATP-dependent 6-phosphofructokinase, muscle type (Pfkm) from Mus musculus (Mouse).